The primary structure comprises 208 residues: Putative ankyrin repeat protein Ta0196 (208 aa).

4 ANK repeats span residues 49 to 78, 82 to 111, 115 to 144, and 148 to 177; these read YQRN…HIDD, EGNT…SIDI, AGNT…NINI, and EGDT…DLNA.

The sequence is that of Putative ankyrin repeat protein Ta0196 from Thermoplasma acidophilum (strain ATCC 25905 / DSM 1728 / JCM 9062 / NBRC 15155 / AMRC-C165).